Here is a 525-residue protein sequence, read N- to C-terminus: GMP synthase [glutamine-hydrolyzing] (525 aa).

Residues 13 to 202 (TILVLDFGSQ…AVEICQAAQT (190 aa)) form the Glutamine amidotransferase type-1 domain. The Nucleophile role is filled by Cys-89. Active-site residues include His-176 and Glu-178. One can recognise a GMPS ATP-PPase domain in the interval 203 to 400 (WTMENFIDTE…LGISHELVWR (198 aa)). Residue 231 to 237 (SGGVDST) coordinates ATP. Arg-304, Asp-462, Lys-517, and Glu-523 together coordinate XMP.

Homodimer. The cofactor is Mg(2+).

It localises to the cytoplasm. The protein localises to the cytosol. The enzyme catalyses XMP + L-glutamine + ATP + H2O = GMP + L-glutamate + AMP + diphosphate + 2 H(+). The protein operates within purine metabolism; GMP biosynthesis; GMP from XMP (L-Gln route): step 1/1. Its function is as follows. Catalyzes the conversion of xanthine monophosphate (XMP) to GMP in the presence of glutamine and ATP through an adenyl-XMP intermediate. This is GMP synthase [glutamine-hydrolyzing] (GUA1) from Eremothecium gossypii (strain ATCC 10895 / CBS 109.51 / FGSC 9923 / NRRL Y-1056) (Yeast).